Reading from the N-terminus, the 217-residue chain is Uracil-DNA glycosylase (217 aa).

Catalysis depends on aspartate 62, which acts as the Proton acceptor.

It belongs to the uracil-DNA glycosylase (UDG) superfamily. UNG family.

Its subcellular location is the cytoplasm. It catalyses the reaction Hydrolyzes single-stranded DNA or mismatched double-stranded DNA and polynucleotides, releasing free uracil.. Its function is as follows. Excises uracil residues from the DNA which can arise as a result of misincorporation of dUMP residues by DNA polymerase or due to deamination of cytosine. This is Uracil-DNA glycosylase from Streptococcus pneumoniae serotype 19F (strain G54).